A 180-amino-acid polypeptide reads, in one-letter code: Telokin-like protein 20 (180 aa).

A disordered region spans residues 112–180 (SKTDAAVHTS…KQKLDNAKQD (69 aa)). The segment covering 156 to 165 (DFEENIDDGD) has biased composition (acidic residues).

This is Telokin-like protein 20 (TLP20) from Lepidoptera (butterflies and moths).